Consider the following 483-residue polypeptide: GTPase Der (483 aa).

EngA-type G domains lie at 3 to 167 (FTLA…GEER) and 212 to 387 (LRIA…EIWN). Residues 9–16 (GRPNVGKS), 56–60 (DTAGL), 119–122 (NKAE), 218–225 (GRPNAGKS), 265–269 (DTAGM), and 330–333 (NKWD) each bind GTP. Positions 388–472 (RRISTGRLNR…PIRLSLRTSD (85 aa)) constitute a KH-like domain.

This sequence belongs to the TRAFAC class TrmE-Era-EngA-EngB-Septin-like GTPase superfamily. EngA (Der) GTPase family. As to quaternary structure, associates with the 50S ribosomal subunit.

Its function is as follows. GTPase that plays an essential role in the late steps of ribosome biogenesis. This Brucella abortus (strain 2308) protein is GTPase Der.